An 80-amino-acid polypeptide reads, in one-letter code: Small ribosomal subunit protein uS17 (80 aa).

The protein belongs to the universal ribosomal protein uS17 family. In terms of assembly, part of the 30S ribosomal subunit.

Its function is as follows. One of the primary rRNA binding proteins, it binds specifically to the 5'-end of 16S ribosomal RNA. In Brucella anthropi (strain ATCC 49188 / DSM 6882 / CCUG 24695 / JCM 21032 / LMG 3331 / NBRC 15819 / NCTC 12168 / Alc 37) (Ochrobactrum anthropi), this protein is Small ribosomal subunit protein uS17.